The chain runs to 409 residues: Multidrug resistance protein MdtG (409 aa).

Transmembrane regions (helical) follow at residues 16-36, 58-78, 92-112, 115-135, 146-166, 173-193, 224-244, 256-276, 291-311, and 379-399; these read LIVAWLGCFLTGAAFSLVMPF, IVFSITFLFSAIASPFWGGLA, LGMGIVMVLMGLAQNIWQFLI, ALLGLLGGFVPNANALIATQV, TLSTGGVSGALLGPMAGGLLA, PVFFITASVLILCFFVTLFCI, LFVTTLIIQVATGSIAPILTL, VAFISGMIASVPGVAALLLSA, ILITALIFSVLLLIPMSYVQT, and AVFLVTAGVVLFNAVYSWNSL.

It belongs to the major facilitator superfamily. DHA1 family. MdtG (TC 2.A.1.2.20) subfamily.

The protein localises to the cell inner membrane. Functionally, confers resistance to fosfomycin and deoxycholate. The polypeptide is Multidrug resistance protein MdtG (Escherichia coli O9:H4 (strain HS)).